The sequence spans 343 residues: Protein RecA (343 aa).

66–73 serves as a coordination point for ATP; the sequence is GPESSGKT.

This sequence belongs to the RecA family.

The protein resides in the cytoplasm. In terms of biological role, can catalyze the hydrolysis of ATP in the presence of single-stranded DNA, the ATP-dependent uptake of single-stranded DNA by duplex DNA, and the ATP-dependent hybridization of homologous single-stranded DNAs. It interacts with LexA causing its activation and leading to its autocatalytic cleavage. This is Protein RecA from Rickettsia bellii (strain OSU 85-389).